The following is a 477-amino-acid chain: MMEIAYQPRIDSEIESLVERINPPRVCVDNDSDPECTLIKVDSANKYGILLDMVQVLADLDLVISKCYISSDGEWFMDVFHVTDQLGNKLTDRSLILYIQQAICSSRTGGITKEMQSNLKREVQQRHVSTEHTAFEITGINRPGLLSEISAVLSDIGCHVTAAVAWTHHERAAMVIYLEDGFNGGPIIDPIRKAQVKDHLDTVMEAHHIVGDVSHVVVRVVEAKGVPVGWAHTERRLHELMYGEGDYENCFDCDCFGDRCDALWRGRCERIHVTIEACNGYSMVNVKCRDRPKLLFDTVCALKELQFVVFHAVAGAKGSTAEQEYFIRKKNGGTLETEGQRERLRHCLVAAISRRASQGLKLEIRTENKMGLLSDVTRVVRENGLSITRAEMCTQGEIAVGSFYVTDVNGGETGPSEVEAVVRELGGAVVSAVKGVGMMPRRIGSTSDSVEQDKAKSSIGRMFWSKLERLSTSIRSL.

ACT domains follow at residues 38-124 (LIKV…REVQ), 134-214 (AFEI…GDVS), 283-358 (MVNV…RASQ), and 361-441 (KLEI…MMPR). A Bipartite nuclear localization signal motif is present at residues 329–345 (KKNGGTLETEGQRERLR).

Expressed in flowers and siliques.

The protein resides in the nucleus. Functionally, may bind amino acids. The chain is ACT domain-containing protein ACR1 from Arabidopsis thaliana (Mouse-ear cress).